Here is a 245-residue protein sequence, read N- to C-terminus: MSEFTLYPAIDMRNGKCVRLVQGDYDQETIYGDSPLDMATRFANEGAKWIHLVDLDGAKAGNRVNHEHVLAIASSLDVKVQIGGGIRTEEDVAFYINNGVARVILGSSAVSNSAFVKKMLAQYGEKIAIGIDARNGFVSTEGWLETSKVKAEDLGKELAKEGAEVFIFTDIQMDGMLAGPNVESTVRLAEATGKQVIASGGISSVADLQKLSAQKQTGVSGAIIGKALYTERFTLAEAIEGLDRV.

D11 serves as the catalytic Proton acceptor. The active-site Proton donor is D132.

This sequence belongs to the HisA/HisF family.

Its subcellular location is the cytoplasm. It carries out the reaction 1-(5-phospho-beta-D-ribosyl)-5-[(5-phospho-beta-D-ribosylamino)methylideneamino]imidazole-4-carboxamide = 5-[(5-phospho-1-deoxy-D-ribulos-1-ylimino)methylamino]-1-(5-phospho-beta-D-ribosyl)imidazole-4-carboxamide. It functions in the pathway amino-acid biosynthesis; L-histidine biosynthesis; L-histidine from 5-phospho-alpha-D-ribose 1-diphosphate: step 4/9. The protein is 1-(5-phosphoribosyl)-5-[(5-phosphoribosylamino)methylideneamino] imidazole-4-carboxamide isomerase of Bacillus pumilus (strain SAFR-032).